A 528-amino-acid chain; its full sequence is Alpha-amylase (528 aa).

Residues 1 to 28 (MNKKWLNIPALIALLAAIAFGSVAPAEA) form the signal peptide. Ca(2+) is bound by residues N168 and D228. D258 acts as the Nucleophile in catalysis. A Ca(2+)-binding site is contributed by H262. Residue E286 is the Proton donor of the active site.

It belongs to the glycosyl hydrolase 13 family. Monomer. Ca(2+) is required as a cofactor.

It catalyses the reaction Endohydrolysis of (1-&gt;4)-alpha-D-glucosidic linkages in polysaccharides containing three or more (1-&gt;4)-alpha-linked D-glucose units.. This is Alpha-amylase from Niallia circulans (Bacillus circulans).